Consider the following 244-residue polypeptide: UPF0280 protein Msp_1322 (244 aa).

This sequence belongs to the UPF0280 family.

The polypeptide is UPF0280 protein Msp_1322 (Methanosphaera stadtmanae (strain ATCC 43021 / DSM 3091 / JCM 11832 / MCB-3)).